Consider the following 343-residue polypeptide: DNA-directed RNA polymerase subunit alpha (343 aa).

An alpha N-terminal domain (alpha-NTD) region spans residues 1 to 236 (MQEHYYKFWR…EQLQIFLTFD (236 aa)). The segment at 253–343 (LNENLFRSVD…QPPQKRETQQ (91 aa)) is alpha C-terminal domain (alpha-CTD).

Belongs to the RNA polymerase alpha chain family. Homodimer. The RNAP catalytic core consists of 2 alpha, 1 beta, 1 beta' and 1 omega subunit. When a sigma factor is associated with the core the holoenzyme is formed, which can initiate transcription.

The catalysed reaction is RNA(n) + a ribonucleoside 5'-triphosphate = RNA(n+1) + diphosphate. DNA-dependent RNA polymerase catalyzes the transcription of DNA into RNA using the four ribonucleoside triphosphates as substrates. The sequence is that of DNA-directed RNA polymerase subunit alpha from Bdellovibrio bacteriovorus (strain ATCC 15356 / DSM 50701 / NCIMB 9529 / HD100).